A 541-amino-acid polypeptide reads, in one-letter code: Chaperonin GroEL 1 (541 aa).

Residues 29 to 32, 86 to 90, Gly-413, 479 to 481, and Asp-495 each bind ATP; these read TLGP, DGTTT, and NAA.

It belongs to the chaperonin (HSP60) family. As to quaternary structure, forms a cylinder of 14 subunits composed of two heptameric rings stacked back-to-back. Interacts with the co-chaperonin GroES.

The protein localises to the cytoplasm. It catalyses the reaction ATP + H2O + a folded polypeptide = ADP + phosphate + an unfolded polypeptide.. Together with its co-chaperonin GroES, plays an essential role in assisting protein folding. The GroEL-GroES system forms a nano-cage that allows encapsulation of the non-native substrate proteins and provides a physical environment optimized to promote and accelerate protein folding. In Synechocystis sp. (strain ATCC 27184 / PCC 6803 / Kazusa), this protein is Chaperonin GroEL 1.